Here is a 203-residue protein sequence, read N- to C-terminus: Tic20 family protein Ycf60 (203 aa).

5 helical membrane-spanning segments follow: residues 2–22, 51–71, 84–104, 131–151, and 153–173; these read IRLF…RLAL, TVPY…YVLP, IILP…VTFF, ILLF…PIEF, and ISFL…STIT.

It belongs to the Tic20 family.

The protein resides in the plastid. The protein localises to the chloroplast membrane. The chain is Tic20 family protein Ycf60 (ycf60) from Pyropia yezoensis (Susabi-nori).